Reading from the N-terminus, the 438-residue chain is GTPase Der (438 aa).

EngA-type G domains are found at residues proline 3 to glutamate 168 and isoleucine 179 to arginine 354. GTP contacts are provided by residues glycine 9–serine 16, aspartate 56–tyrosine 60, asparagine 120–aspartate 123, glycine 185–serine 192, aspartate 232–leucine 236, and asparagine 297–aspartate 300. A KH-like domain is found at glutamine 355 to lysine 438.

It belongs to the TRAFAC class TrmE-Era-EngA-EngB-Septin-like GTPase superfamily. EngA (Der) GTPase family. Associates with the 50S ribosomal subunit.

Its function is as follows. GTPase that plays an essential role in the late steps of ribosome biogenesis. This chain is GTPase Der, found in Chlorobaculum parvum (strain DSM 263 / NCIMB 8327) (Chlorobium vibrioforme subsp. thiosulfatophilum).